Reading from the N-terminus, the 165-residue chain is AIG2-like protein A (165 aa).

Residue 15–20 (YGSFQD) participates in substrate binding. Catalysis depends on glutamate 83, which acts as the Proton acceptor.

It belongs to the gamma-glutamylcyclotransferase family. As to expression, expressed only in seeds.

Its function is as follows. Putative gamma-glutamylcyclotransferase. The protein is AIG2-like protein A of Arabidopsis thaliana (Mouse-ear cress).